Reading from the N-terminus, the 487-residue chain is MNPPSGPRTQEPSCVATPASPSRWDGYRSSTSSLDQPLPISPTAARAQAAAWIPFPTVDVPDHAHYTLGTVILLVGLTGILGNLMVIYTFCRSRGLRTPANMFIINLAVSDFFMSFTQAPVFFASSLHKRWLFGEAGCEFYAFCGALFGITSMITLMAIALDRYLVITHPLATIGVVSKRRAALVLLGVWLYALAWSLPPFFGWSAYVPEGLLTSCSWDYMSFTPSVRAYTMLLFCFVFFLPLLVIVYCYIFIFRAIRETGQALQTFRACEGGGRSPRQRQRLQREWKMAKIELLVILLFVLSWAPYSIVALMAFAGYAHVLTPYMNSVPAVIAKASAIHNPIIYAITHPKYRMAIAQHLPCLGVLLGVSGQHTGPYASYRSTHRSTLSSQASDLSWISGRRRQASLGSESEVGWMDTEAAAVWGAAQQVSGRFPCSQGLEDREAKAPVRPQGREAETPGQAMTMAMAPWDTPANCELPLHPGWAFH.

A disordered region spans residues 1-37 (MNPPSGPRTQEPSCVATPASPSRWDGYRSSTSSLDQP). Residues 1 to 67 (MNPPSGPRTQ…VDVPDHAHYT (67 aa)) are Extracellular-facing. A helical membrane pass occupies residues 68–88 (LGTVILLVGLTGILGNLMVIY). Over 89–102 (TFCRSRGLRTPANM) the chain is Cytoplasmic. The helical transmembrane segment at 103–123 (FIINLAVSDFFMSFTQAPVFF) threads the bilayer. Over 124–139 (ASSLHKRWLFGEAGCE) the chain is Extracellular. Cysteine 138 and cysteine 216 are disulfide-bonded. A helical membrane pass occupies residues 140–160 (FYAFCGALFGITSMITLMAIA). Residues 161 to 183 (LDRYLVITHPLATIGVVSKRRAA) are Cytoplasmic-facing. The helical transmembrane segment at 184 to 204 (LVLLGVWLYALAWSLPPFFGW) threads the bilayer. Over 205-233 (SAYVPEGLLTSCSWDYMSFTPSVRAYTML) the chain is Extracellular. Residues 234 to 254 (LFCFVFFLPLLVIVYCYIFIF) traverse the membrane as a helical segment. Over 255–291 (RAIRETGQALQTFRACEGGGRSPRQRQRLQREWKMAK) the chain is Cytoplasmic. A helical transmembrane segment spans residues 292–312 (IELLVILLFVLSWAPYSIVAL). Residues 313–327 (MAFAGYAHVLTPYMN) are Extracellular-facing. The chain crosses the membrane as a helical span at residues 328–348 (SVPAVIAKASAIHNPIIYAIT). N6-(retinylidene)lysine is present on lysine 335. Over 349–487 (HPKYRMAIAQ…LPLHPGWAFH (139 aa)) the chain is Cytoplasmic. A disordered region spans residues 436-459 (CSQGLEDREAKAPVRPQGREAETP). Basic and acidic residues predominate over residues 440-457 (LEDREAKAPVRPQGREAE).

This sequence belongs to the G-protein coupled receptor 1 family. Opsin subfamily. In terms of tissue distribution, eye. Expression is restricted within the ganglion cell layer.

Its subcellular location is the cell membrane. It is found in the cell projection. The protein resides in the axon. The protein localises to the dendrite. It localises to the perikaryon. Its function is as follows. Photoreceptor that binds cis-retinaldehydes. Contributes to pupillar reflex, photoentrainment and other non-image forming responses to light. May be involved in the optokinetic visual tracking response. May be involved in the regulation of retinal hyaloid vessel growth and regression. This Felis catus (Cat) protein is Melanopsin (OPN4).